The chain runs to 838 residues: Protein translocase subunit SecA (838 aa).

Residues Q86, 104 to 108 (GEGKT), and D493 each bind ATP. The tract at residues 793 to 838 (NTQAVSGGEDSGKKKTKKPVVKSNTVKRNDPCPCGSGKKYKNCHGQ) is disordered. The Zn(2+) site is built by C824, C826, C835, and H836.

Belongs to the SecA family. Monomer and homodimer. Part of the essential Sec protein translocation apparatus which comprises SecA, SecYEG and auxiliary proteins SecDF. Other proteins may also be involved. The cofactor is Zn(2+).

The protein localises to the cell membrane. The protein resides in the cytoplasm. The enzyme catalyses ATP + H2O + cellular proteinSide 1 = ADP + phosphate + cellular proteinSide 2.. In terms of biological role, part of the Sec protein translocase complex. Interacts with the SecYEG preprotein conducting channel. Has a central role in coupling the hydrolysis of ATP to the transfer of proteins into and across the cell membrane, serving as an ATP-driven molecular motor driving the stepwise translocation of polypeptide chains across the membrane. The polypeptide is Protein translocase subunit SecA (Oceanobacillus iheyensis (strain DSM 14371 / CIP 107618 / JCM 11309 / KCTC 3954 / HTE831)).